Here is a 611-residue protein sequence, read N- to C-terminus: MDASRDIGSFVVWDYVVFAGMLLISAAIGIYYAFAGGGQQTSKDFLMGGRSMSAVPVALSLTASFMSAVTVLGTPAEVYRFGAIFSIFVITYFFVVVISAEVFLPVFYRLGITSTYEYLELRFNRCIRLCGTILFIVQTILYTGIVIYAPALALNQVTGFDLWGAVVATGVVCTFYCTLGGLKAVVWTDVFQVGIMVAGFASVIIQASITQHGINKILSDAFNGGRLNFWNFDPNPLQRHTFWTIVIGGTFTWTTIYGVNQSQVQRYISCKSRLHAKLSLYVNLVGLWVILTCSIFCGLALYSRYRECDPWTSKKVSAIDQLMPYLVLDILKNYPGVPGLFVACAYSGTLSTVSSSINALAAVTVEDLIKPRFKSLSEKSLSWISQGMSVLYGALCIGMAALASLMGALLQAALSIFGMVGGPLLGLFSLGILVPFANSIGALTGLLAGFAISLWVGIGAQLYPPLPERTLPLPLETYGCNITHNGSDWMSTTEMPFSTSAFQIHNAERTPLMDNWYSLSYLYFSTIGTLTTLFVGILISLSTGGRKQNLDPRFLLTKQDFLSNFDVFKKRNHVLNYKLHPVEVGGTDNPAFNHVELNFTDHSGKINGTRL.

The Extracellular segment spans residues 1 to 9 (MDASRDIGS). A helical transmembrane segment spans residues 10–30 (FVVWDYVVFAGMLLISAAIGI). Topologically, residues 31–51 (YYAFAGGGQQTSKDFLMGGRS) are cytoplasmic. The helical transmembrane segment at 52–72 (MSAVPVALSLTASFMSAVTVL) threads the bilayer. Residues 73 to 86 (GTPAEVYRFGAIFS) are Extracellular-facing. A helical transmembrane segment spans residues 87–107 (IFVITYFFVVVISAEVFLPVF). The Cytoplasmic segment spans residues 108–132 (YRLGITSTYEYLELRFNRCIRLCGT). The chain crosses the membrane as a helical span at residues 133–153 (ILFIVQTILYTGIVIYAPALA). Topologically, residues 154–161 (LNQVTGFD) are extracellular. Residues 162–182 (LWGAVVATGVVCTFYCTLGGL) traverse the membrane as a helical segment. Over 183–184 (KA) the chain is Cytoplasmic. The chain crosses the membrane as a helical span at residues 185 to 205 (VVWTDVFQVGIMVAGFASVII). The Extracellular segment spans residues 206–239 (QASITQHGINKILSDAFNGGRLNFWNFDPNPLQR). Residues 240 to 260 (HTFWTIVIGGTFTWTTIYGVN) traverse the membrane as a helical segment. Topologically, residues 261–279 (QSQVQRYISCKSRLHAKLS) are cytoplasmic. The helical transmembrane segment at 280-300 (LYVNLVGLWVILTCSIFCGLA) threads the bilayer. Topologically, residues 301–336 (LYSRYRECDPWTSKKVSAIDQLMPYLVLDILKNYPG) are extracellular. A helical transmembrane segment spans residues 337 to 359 (VPGLFVACAYSGTLSTVSSSINA). Topologically, residues 360-389 (LAAVTVEDLIKPRFKSLSEKSLSWISQGMS) are cytoplasmic. Residues 390–410 (VLYGALCIGMAALASLMGALL) form a helical membrane-spanning segment. Topologically, residues 411–415 (QAALS) are extracellular. Residues 416-436 (IFGMVGGPLLGLFSLGILVPF) traverse the membrane as a helical segment. The Cytoplasmic segment spans residues 437–439 (ANS). Residues 440-460 (IGALTGLLAGFAISLWVGIGA) form a helical membrane-spanning segment. The Extracellular portion of the chain corresponds to 461 to 518 (QLYPPLPERTLPLPLETYGCNITHNGSDWMSTTEMPFSTSAFQIHNAERTPLMDNWYS). N-linked (GlcNAc...) asparagine glycosylation is present at Asn-485. A helical transmembrane segment spans residues 519–539 (LSYLYFSTIGTLTTLFVGILI). Over 540 to 611 (SLSTGGRKQN…HSGKINGTRL (72 aa)) the chain is Cytoplasmic. Positions 609–611 (TRL) match the PDZ-binding motif.

The protein belongs to the sodium:solute symporter (SSF) (TC 2.A.21) family. In terms of assembly, interacts (via PDZ-binding motif) with PDZK1 (via PDZ domains 1 and 3); interaction increases nicotinate transport activity of SLC5A8. Expressed in brain, colon, kidney and in the ileum and jejunum of small intestine. In the kidney, expression occurred in the proximal tubule and the loop of Henle, being restricted to tubular epithelial cells in both the cortex and the medulla. In the colon, predominantly expressed in the distal half of the large bowel and in the most terminal ileum. Localized selectively in the luminal surface of crypts in the large intestine and to the brush border in the middle parts of crypts in the cecum. In the brain, expression was seen throughout, exclusively in neurons, including the cortex, hippocampus, cerebellum and pituitary gland (at protein level). Expression is reduced in oligodendrogliomas.

It is found in the apical cell membrane. It catalyses the reaction (S)-lactate(out) + 2 Na(+)(out) = (S)-lactate(in) + 2 Na(+)(in). The catalysed reaction is propanoate(out) + 2 Na(+)(out) = propanoate(in) + 2 Na(+)(in). It carries out the reaction pyruvate(out) + 2 Na(+)(out) = pyruvate(in) + 2 Na(+)(in). The enzyme catalyses acetate(out) + 2 Na(+)(out) = acetate(in) + 2 Na(+)(in). It catalyses the reaction butanoate(out) + 2 Na(+)(out) = butanoate(in) + 2 Na(+)(in). The catalysed reaction is nicotinate(out) + 2 Na(+)(out) = nicotinate(in) + 2 Na(+)(in). It carries out the reaction (R)-3-hydroxybutanoate(out) + 2 Na(+)(out) = (R)-3-hydroxybutanoate(in) + 2 Na(+)(in). The enzyme catalyses acetoacetate(out) + 2 Na(+)(out) = acetoacetate(in) + 2 Na(+)(in). It catalyses the reaction 4-methyl-2-oxopentanoate(out) + 2 Na(+)(out) = 4-methyl-2-oxopentanoate(in) + 2 Na(+)(in). The catalysed reaction is 5-oxo-L-proline(out) + 2 Na(+)(out) = 5-oxo-L-proline(in) + 2 Na(+)(in). It carries out the reaction iodide(out) = iodide(in). The enzyme catalyses chloride(in) = chloride(out). It catalyses the reaction nitrate(in) = nitrate(out). The catalysed reaction is bromide(in) = bromide(out). With respect to regulation, transport of D-lactate and pyruvate stimulated by alpha-cyano-4-hydroxycinnamic acid, but inhibited by the short-chain fatty acids acetate, propionate and butyrate. Functionally, acts as an electrogenic sodium (Na(+)) and chloride (Cl-)-dependent sodium-coupled solute transporter, including transport of monocarboxylates (short-chain fatty acids including L-lactate, D-lactate, pyruvate, acetate, propionate, valerate and butyrate), mocarboxylate drugs (nicotinate, benzoate, salicylate and 5-aminosalicylate) and ketone bodies (beta-D-hydroxybutyrate, acetoacetate and alpha-ketoisocaproate), with a Na(+):substrate stoichiometry of between 4:1 and 2:1. Catalyzes passive carrier mediated diffusion of iodide. Mediates iodide transport from the thyrocyte into the colloid lumen through the apical membrane. May be responsible for the absorption of D-lactate and monocarboxylate drugs from the intestinal tract. May play a critical role in the entry of L-lactate and ketone bodies into neurons by a process driven by an electrochemical Na(+) gradient and hence contribute to the maintenance of the energy status and function of neurons. Mediates sodium-coupled electrogenic transport of pyroglutamate (5-oxo-L-proline). Can mediate the transport of chloride, bromide, iodide and nitrate ions when external concentration of sodium ions is reduced. This chain is Sodium-coupled monocarboxylate transporter 1, found in Mus musculus (Mouse).